The sequence spans 435 residues: GTPase Der (435 aa).

EngA-type G domains are found at residues 3–168 and 176–351; these read PLVA…PDET and IKLA…QNRQ. GTP is bound by residues 9–16, 56–60, 120–123, 182–189, 229–233, and 294–297; these read GRPNVGKS, DTGGY, NKVE, DTAGL, and NKWD. One can recognise a KH-like domain in the interval 352 to 435; that stretch reads KKISTSELNR…VPVSFRYRKK (84 aa).

It belongs to the TRAFAC class TrmE-Era-EngA-EngB-Septin-like GTPase superfamily. EngA (Der) GTPase family. As to quaternary structure, associates with the 50S ribosomal subunit.

Its function is as follows. GTPase that plays an essential role in the late steps of ribosome biogenesis. The protein is GTPase Der of Chlorobium phaeobacteroides (strain BS1).